Consider the following 83-residue polypeptide: Small ribosomal subunit protein uS17 (83 aa).

It belongs to the universal ribosomal protein uS17 family. As to quaternary structure, part of the 30S ribosomal subunit.

Functionally, one of the primary rRNA binding proteins, it binds specifically to the 5'-end of 16S ribosomal RNA. This Chlamydia trachomatis serovar L2 (strain ATCC VR-902B / DSM 19102 / 434/Bu) protein is Small ribosomal subunit protein uS17.